Consider the following 1404-residue polypeptide: ABC transporter G family member 47 (1404 aa).

The 268-residue stretch at 156-423 (GNALHITRKK…FQSIGFKCPE (268 aa)) folds into the ABC transporter 1 domain. An ATP-binding site is contributed by 189–196 (GPPGSGKT). In terms of domain architecture, ABC transmembrane type-2 1 spans 501–714 (ELLQANIDRE…ALNTLAVNEF (214 aa)). 7 helical membrane passes run 519 to 539 (FLYIFQAIRLTVMAINTMTVF), 565 to 585 (MIMFNGLAEMGLAIAKLPVFF), 607 to 627 (TPISFLNTIVWVFLTYYVIGF), 638 to 658 (FLALFVMSEATSGLFRFIASL), 663 to 683 (VVASTMGSSCILISMLSSGFI), 692 to 712 (WWIWGYWISPLMYALNTLAVN), and 751 to 771 (VGALLGYVILLNVLYTICLIF). The ABC transporter 2 domain occupies 808–1059 (ITFEDIKYSI…ELIRYFEAIE (252 aa)). 852 to 859 (GVSGAGKT) serves as a coordination point for ATP. The 215-residue stretch at 1132 to 1346 (TQCLACLWKQ…TLNGLVTSQF (215 aa)) folds into the ABC transmembrane type-2 2 domain. Helical transmembrane passes span 1152-1172 (IAVKYFFTIIVALLFGTMFWG), 1183-1199 (LFSAMGSMYSTCLTMGV), 1239-1259 (LPYIFLQTIIYGMLVYAMIGY), 1266-1286 (FFWYLFFMYFTLSYYTFYGMM), 1298-1318 (TVVSTGFYTMWNLFSGFLIPL), 1321-1341 (IPIWWRWYYWICPVAWTLNGL), and 1373-1393 (LLWVPAMVVVSFAVLFAFLFG).

Belongs to the ABC transporter superfamily. ABCG family. PDR (TC 3.A.1.205) subfamily.

The protein localises to the membrane. In terms of biological role, may be a general defense protein. This Oryza sativa subsp. japonica (Rice) protein is ABC transporter G family member 47.